We begin with the raw amino-acid sequence, 241 residues long: Centromere protein H (241 aa).

N-acetylmethionine is present on methionine 1. Residues 1-24 are disordered; the sequence is MEEQPRERSEAGAEACEEKRGLSQ. The stretch at 28–186 forms a coiled coil; it reads ERIEDRISLL…KEDVDKMENS (159 aa). Residue lysine 61 forms a Glycyl lysine isopeptide (Lys-Gly) (interchain with G-Cter in SUMO2) linkage. Threonine 62 carries the post-translational modification Phosphothreonine.

The protein belongs to the CENP-H/MCM16 family. As to quaternary structure, self-associates. Component of the CENPA-NAC complex, at least composed of CENPA, CENPC, CENPH, CENPM, CENPN, CENPT and CENPU. The CENPA-NAC complex interacts with the CENPA-CAD complex, composed of CENPI, CENPK, CENPL, CENPO, CENPP, CENPQ, CENPR and CENPS. Interacts directly with CENPK. Interacts with KIF2C and NDC80. Interacts with TRIM36. In terms of tissue distribution, abundantly expressed in thymus, spleen, uterus, ovary, testis and muscle, and weakly expressed in small intestine, lung and stomach. Barely detectable expression in kidney, liver, skin and prostate gland. Not detected in brain, heart or adrenal gland. Also expressed weakly in various hematopoietic cell lines.

It localises to the nucleus. The protein localises to the chromosome. The protein resides in the centromere. Its subcellular location is the kinetochore. Component of the CENPA-NAC (nucleosome-associated) complex, a complex that plays a central role in assembly of kinetochore proteins, mitotic progression and chromosome segregation. The CENPA-NAC complex recruits the CENPA-CAD (nucleosome distal) complex and may be involved in incorporation of newly synthesized CENPA into centromeres. Required for chromosome congression and efficiently align the chromosomes on a metaphase plate. This chain is Centromere protein H, found in Mus musculus (Mouse).